The chain runs to 406 residues: Argininosuccinate synthase (406 aa).

8–16 contacts ATP; the sequence is AYSGGLDTT. Residues Tyr86 and Ser91 each contribute to the L-citrulline site. Gly116 contacts ATP. Positions 118, 122, and 123 each coordinate L-aspartate. An L-citrulline-binding site is contributed by Asn122. L-citrulline-binding residues include Arg126, Ser175, Ser184, Glu261, and Tyr273.

The protein belongs to the argininosuccinate synthase family. Type 1 subfamily. In terms of assembly, homotetramer.

It localises to the cytoplasm. The enzyme catalyses L-citrulline + L-aspartate + ATP = 2-(N(omega)-L-arginino)succinate + AMP + diphosphate + H(+). The protein operates within amino-acid biosynthesis; L-arginine biosynthesis; L-arginine from L-ornithine and carbamoyl phosphate: step 2/3. This is Argininosuccinate synthase from Brachyspira hyodysenteriae (strain ATCC 49526 / WA1).